The chain runs to 257 residues: Urease accessory protein UreD (257 aa).

Belongs to the UreD family. As to quaternary structure, ureD, UreF and UreG form a complex that acts as a GTP-hydrolysis-dependent molecular chaperone, activating the urease apoprotein by helping to assemble the nickel containing metallocenter of UreC. The UreE protein probably delivers the nickel.

The protein resides in the cytoplasm. Required for maturation of urease via the functional incorporation of the urease nickel metallocenter. In Ruegeria pomeroyi (strain ATCC 700808 / DSM 15171 / DSS-3) (Silicibacter pomeroyi), this protein is Urease accessory protein UreD.